We begin with the raw amino-acid sequence, 793 residues long: Protein zer-1 homolog (793 aa).

3 LRR repeats span residues 84 to 108 (RTSL…LMRH), 187 to 210 (LHDL…ALGS), and 269 to 294 (LRHL…ESTT).

This sequence belongs to the zyg-11 family.

In terms of biological role, serves as substrate adapter subunit in an E3 ubiquitin ligase complex CG12084-cul-2-elongin BC. Targets substrates bearing N-terminal glycine degrons for proteasomal degradation. The protein is Protein zer-1 homolog of Drosophila melanogaster (Fruit fly).